We begin with the raw amino-acid sequence, 88 residues long: Small ribosomal subunit protein uS17 (88 aa).

This sequence belongs to the universal ribosomal protein uS17 family. Part of the 30S ribosomal subunit.

In terms of biological role, one of the primary rRNA binding proteins, it binds specifically to the 5'-end of 16S ribosomal RNA. This is Small ribosomal subunit protein uS17 from Nitratidesulfovibrio vulgaris (strain ATCC 29579 / DSM 644 / CCUG 34227 / NCIMB 8303 / VKM B-1760 / Hildenborough) (Desulfovibrio vulgaris).